The chain runs to 938 residues: Myocardin (938 aa).

Residues 12-27 (IRRKFRSVLQLRLQQR) carry the MEF2C-binding motif. RPEL repeat units follow at residues 18–43 (SVLQ…PPLK), 62–87 (DSLR…QAST), and 106–131 (DDLN…PMDS). A disordered region spans residues 37–64 (GLIPPLKSPTEFHDPRKKLDSAKTEDSL). Over residues 46 to 64 (TEFHDPRKKLDSAKTEDSL) the composition is skewed to basic and acidic residues. The interval 153 to 205 (FEDDSSRDGLSPDQARSEDPQGSGGSTPDIKSTEAPLAGPLDTIQDLTPGSES) is HDAC5-binding. 2 disordered regions span residues 155–282 (DDSS…PPPM) and 339–381 (NEQM…PLPP). Over residues 210–221 (TASQLSNQSDSG) the composition is skewed to polar residues. Residues 248–265 (NRHKKPKDPKPKVKKLKY) show a composition bias toward basic residues. The segment covering 345–360 (NPNSSSTPLNNTPLSP) has biased composition (low complexity). Over residues 361 to 372 (VKNSLSGQTGVS) the composition is skewed to polar residues. The SAP domain occupies 383-417 (LDDLKVSELRQQLRIRGLPVSGTKTALVDRLRPFQ). Ser457, Ser461, Ser465, and Ser469 each carry phosphoserine; by GSK3-beta. Residues 501-521 (ESLLSSLNGGSGPSEPDGLDS) are disordered. Residues 522–566 (EKDKMLVEKQKVINQLTWKLRQEQRQVEELRMQLQKQKSGCNDQK) are a coiled coil. The disordered stretch occupies residues 586–606 (AAQQASGKGQGHSSDSPPPAC). Positions 588 to 600 (QQASGKGQGHSSD) are enriched in polar residues. Phosphoserine; by GSK3-beta is present on residues Ser627, Ser631, Ser635, and Ser639. Composition is skewed to polar residues over residues 667–694 (GAQR…QSSD) and 701–713 (SIPS…SSPT). The interval 667–734 (GAQRENHGVS…DAVKQQMTRS (68 aa)) is disordered. The segment at 717–938 (ITQPPSYEDA…SPMDLHLQQW (222 aa)) is required for interaction with and ubiquitination by STUB1. A phosphoserine; by MAPK1 and MAPK3 mark is found at Ser815, Ser862, and Ser869. Residue Thr896 is modified to Phosphothreonine; by MAPK1 and MAPK3.

As to quaternary structure, homodimer. Interacts with MLLT7/FOXO4. Interacts with SRF, its association does not depend on specific DNA sequences for ternary complex formation. Interacts (via C-terminal) with EP300 (via the CREB-binding domain). Interacts with HDAC4 and HDAC5. Interacts with MEF2C. Interacts (via C-terminus) with STUB1/CHIP. Interacts with PURB. Ubiquitinated; by STUB1/CHIP at the C-terminus, leading to its degradation by the proteasome. Phosphorylation by GSK3B is required for STUB1/CHIP-mediated ubiquitination. In terms of processing, phosphorylation negatively regulates transcriptional activity. Phosphorylated; by GSK3B. As to expression, abundantly expressed in the heart, aorta media and bladder, weakly expressed in the stomach, intestine and lung.

It localises to the nucleus. Functionally, smooth muscle cells (SM) and cardiac muscle cells-specific transcriptional factor which uses the canonical single or multiple CArG boxes DNA sequence. Acts as a cofactor of serum response factor (SRF) with the potential to modulate SRF-target genes. Plays a crucial role in cardiogenesis, urinary bladder development, and differentiation of the smooth muscle cell lineage (myogenesis). Positively regulates the transcription of genes involved in vascular smooth muscle contraction. This chain is Myocardin (Myocd), found in Rattus norvegicus (Rat).